The sequence spans 395 residues: Tyrosine--tRNA ligase (395 aa).

Positions 42-51 match the 'HIGH' region motif; the sequence is PTAPDIHLGH. The 'KMSKS' region motif lies at 226–230; sequence KMSKS. K229 contacts ATP. The 61-residue stretch at 334-394 folds into the S4 RNA-binding domain; it reads IGLANLLKEA…GKRKFARVTV (61 aa).

The protein belongs to the class-I aminoacyl-tRNA synthetase family. TyrS type 2 subfamily. As to quaternary structure, homodimer.

Its subcellular location is the cytoplasm. It catalyses the reaction tRNA(Tyr) + L-tyrosine + ATP = L-tyrosyl-tRNA(Tyr) + AMP + diphosphate + H(+). Catalyzes the attachment of tyrosine to tRNA(Tyr) in a two-step reaction: tyrosine is first activated by ATP to form Tyr-AMP and then transferred to the acceptor end of tRNA(Tyr). This is Tyrosine--tRNA ligase from Mannheimia succiniciproducens (strain KCTC 0769BP / MBEL55E).